Here is a 426-residue protein sequence, read N- to C-terminus: Glucose-1-phosphate adenylyltransferase (426 aa).

Alpha-D-glucose 1-phosphate contacts are provided by residues Y100, G165, 180 to 181, and S191; that span reads EK.

The protein belongs to the bacterial/plant glucose-1-phosphate adenylyltransferase family. As to quaternary structure, homotetramer.

It carries out the reaction alpha-D-glucose 1-phosphate + ATP + H(+) = ADP-alpha-D-glucose + diphosphate. The protein operates within glycan biosynthesis; glycogen biosynthesis. Functionally, involved in the biosynthesis of ADP-glucose, a building block required for the elongation reactions to produce glycogen. Catalyzes the reaction between ATP and alpha-D-glucose 1-phosphate (G1P) to produce pyrophosphate and ADP-Glc. The polypeptide is Glucose-1-phosphate adenylyltransferase (Acetivibrio thermocellus (strain ATCC 27405 / DSM 1237 / JCM 9322 / NBRC 103400 / NCIMB 10682 / NRRL B-4536 / VPI 7372) (Clostridium thermocellum)).